A 73-amino-acid polypeptide reads, in one-letter code: Translation initiation factor IF-1 (73 aa).

Residues 1–72 form the S1-like domain; it reads MAKQDVIEME…TKGRITYRLR (72 aa).

Belongs to the IF-1 family. As to quaternary structure, component of the 30S ribosomal translation pre-initiation complex which assembles on the 30S ribosome in the order IF-2 and IF-3, IF-1 and N-formylmethionyl-tRNA(fMet); mRNA recruitment can occur at any time during PIC assembly.

The protein localises to the cytoplasm. One of the essential components for the initiation of protein synthesis. Stabilizes the binding of IF-2 and IF-3 on the 30S subunit to which N-formylmethionyl-tRNA(fMet) subsequently binds. Helps modulate mRNA selection, yielding the 30S pre-initiation complex (PIC). Upon addition of the 50S ribosomal subunit IF-1, IF-2 and IF-3 are released leaving the mature 70S translation initiation complex. This Gloeobacter violaceus (strain ATCC 29082 / PCC 7421) protein is Translation initiation factor IF-1.